A 324-amino-acid polypeptide reads, in one-letter code: tRNA dimethylallyltransferase (324 aa).

17–24 (GPTASGKT) is an ATP binding site. Substrate is bound at residue 19–24 (TASGKT). Interaction with substrate tRNA stretches follow at residues 42-45 (DSAL), 166-170 (QRIQR), and 251-256 (RCVGYR).

Belongs to the IPP transferase family. In terms of assembly, monomer. The cofactor is Mg(2+).

The catalysed reaction is adenosine(37) in tRNA + dimethylallyl diphosphate = N(6)-dimethylallyladenosine(37) in tRNA + diphosphate. Functionally, catalyzes the transfer of a dimethylallyl group onto the adenine at position 37 in tRNAs that read codons beginning with uridine, leading to the formation of N6-(dimethylallyl)adenosine (i(6)A). This Burkholderia thailandensis (strain ATCC 700388 / DSM 13276 / CCUG 48851 / CIP 106301 / E264) protein is tRNA dimethylallyltransferase.